Reading from the N-terminus, the 435-residue chain is Minor fimbrial subunit HifE (435 aa).

The first 31 residues, 1–31 (MKTLTTYAKYFTPISKIAFLFCFLMGNIAEA), serve as a signal peptide directing secretion.

It belongs to the fimbrial protein family.

The protein resides in the fimbrium. Its function is as follows. May be a minor structural protein required for pilus biogenesis. May be the adhesive component in the pili. This Haemophilus influenzae protein is Minor fimbrial subunit HifE (hifE).